We begin with the raw amino-acid sequence, 238 residues long: Protein MIS12 homolog (238 aa).

Residues 117 to 149 (ELDAELDSLRDKLNVVGKRSVELDSELQALERS) adopt a coiled-coil conformation.

This sequence belongs to the mis12 family.

Its subcellular location is the chromosome. The protein localises to the centromere. The protein resides in the kinetochore. In terms of biological role, constitutive component of kinetochores that is essential for proper cell division during mitotic cell cycle. May play a role in the modulation of centromere during meiosis. This Arabidopsis thaliana (Mouse-ear cress) protein is Protein MIS12 homolog.